The primary structure comprises 434 residues: Indole diterpene prenyltransferase nodD2 (434 aa).

L-tryptophan is bound by residues 85-86 and E94; that span reads LI. Substrate-binding residues include R107, K194, R268, K270, Y272, Q351, Y353, Y418, and Y422.

This sequence belongs to the tryptophan dimethylallyltransferase family.

It functions in the pathway secondary metabolite biosynthesis. In terms of biological role, indole diterpene prenyltransferase; part of the gene cluster that mediates the biosynthesis of the indole diterpenes nodulisporic acids (NA). Nodulisporic acid A (NAA) and its chemically modified derivatives are of particular significance because of their highly potent insecticidal activity against blood-feeding arthropods and lack of observable adverse effects on mammals, in particular the tremogenicity associated with the paspaline-derived IDTs is not observed. The geranylgeranyl diphosphate (GGPP) synthase ggs1, localized outside of the cluster, is proposed to catalyze the first step in nodulisporic acid biosynthesis via conversion of farnesyl pyrophosphate and isopentyl pyrophosphate into geranylgeranyl pyrophosphate (GGPP). Condensation of indole-3-glycerol phosphate with GGPP by the prenyl transferase nodC then forms 3-geranylgeranylindole (3-GGI). Epoxidation by the FAD-dependent monooxygenase nodM leads to a single-epoxidized-GGI that is substrate of the terpene cyclase nodB for cyclization to yield emindole SB. The terminal methyl carbon, C28, of emindole SB is then oxidized by the cytochrome P450 monooxygenase nodW to produce nodulisporic acid F (NAF), the pentacyclic core of NAA. NAF is converted to nodulisporic acid E (NAE) via prenylation. This step is probably performed by one of the indole diterpene prenyltransferases nodD1 or nodD2. Several oxidation steps performed by the FAD-linked oxidoreductase nodO and one of the cytochrome P450 monooxygenase nodR, nodX or nodZ further convert NAE to nodulisporic acid D (NAD). NAD is substrate of cytochrome P450 monooxygenase nodJ to produce the precursor of nodulisporic acid C (NAC), converted to NAC by one of the indole diterpene prenyltransferases nodD1 or nodD2. The FAD-dependent monooxygenase nodY2 then oxidizes NAC to nodulisporic acid B (NAB). Finally NAB is converted to NAA by one of the cytochrome P450 monooxygenases nodR, nodX or nodZ. In Hypoxylon pulicicidum, this protein is Indole diterpene prenyltransferase nodD2.